We begin with the raw amino-acid sequence, 157 residues long: ATP synthase subunit b', chloroplastic (157 aa).

The helical transmembrane segment at 26–43 (LMASQFLLIMLILDITFY) threads the bilayer.

Belongs to the ATPase B chain family. In terms of assembly, F-type ATPases have 2 components, F(1) - the catalytic core - and F(0) - the membrane proton channel. F(1) has five subunits: alpha(3), beta(3), gamma(1), delta(1), epsilon(1). F(0) has four main subunits: a(1), b(1), b'(1) and c(10-14). The alpha and beta chains form an alternating ring which encloses part of the gamma chain. F(1) is attached to F(0) by a central stalk formed by the gamma and epsilon chains, while a peripheral stalk is formed by the delta, b and b' chains.

It localises to the plastid. The protein localises to the chloroplast thylakoid membrane. Functionally, f(1)F(0) ATP synthase produces ATP from ADP in the presence of a proton or sodium gradient. F-type ATPases consist of two structural domains, F(1) containing the extramembraneous catalytic core and F(0) containing the membrane proton channel, linked together by a central stalk and a peripheral stalk. During catalysis, ATP synthesis in the catalytic domain of F(1) is coupled via a rotary mechanism of the central stalk subunits to proton translocation. Its function is as follows. Component of the F(0) channel, it forms part of the peripheral stalk, linking F(1) to F(0). The b'-subunit is a diverged and duplicated form of b found in plants and photosynthetic bacteria. This Cyanidium caldarium (Red alga) protein is ATP synthase subunit b', chloroplastic.